A 365-amino-acid polypeptide reads, in one-letter code: 5-hydroxytryptamine receptor 1F (365 aa).

Residues 1–24 lie on the Extracellular side of the membrane; sequence MDFLNSSDQNLTSEELLNRMPSKI. 2 N-linked (GlcNAc...) asparagine glycosylation sites follow: Asn5 and Asn10. Residues 25–49 form a helical membrane-spanning segment; that stretch reads LVSLTLSGLALMTTTINSLVIAAII. Over 50–59 the chain is Cytoplasmic; that stretch reads VTRKLHHPAN. The helical transmembrane segment at 60–81 threads the bilayer; it reads YLICSLAVTDFLVAVLVMPFSI. At 82-96 the chain is on the extracellular side; that stretch reads VYIVRESWIMGQVVC. The cysteines at positions 96 and 172 are disulfide-linked. The chain crosses the membrane as a helical span at residues 97–119; it reads DIWLSVDITCCTCSILHLSAIAL. Serotonin contacts are provided by Asp103 and Cys107. Residues 120 to 122 carry the DRY motif; important for ligand-induced conformation changes motif; that stretch reads DRY. Residues 120 to 139 lie on the Cytoplasmic side of the membrane; that stretch reads DRYRAITDAVEYARKRTPKH. A helical transmembrane segment spans residues 140–159; the sequence is AGIMITIVWIISVFISMPPL. Over 160–178 the chain is Extracellular; it reads FWRHQGTSRDDECIIKHDH. Residues 179-202 traverse the membrane as a helical segment; the sequence is IVSTIYSTFGAFYIPLALILILYY. Residues 203-291 are Cytoplasmic-facing; that stretch reads KIYRAAKTLY…KISGTRERKA (89 aa). Residues 292 to 315 traverse the membrane as a helical segment; the sequence is ATTLGLILGAFVICWLPFFVKELV. At 316 to 327 the chain is on the extracellular side; it reads VNVCDKCKISEE. A helical membrane pass occupies residues 328–350; the sequence is MSNFLAWLGYLNSLINPLIYTIF. An NPxxY motif; important for ligand-induced conformation changes and signaling motif is present at residues 343 to 347; the sequence is NPLIY. Residues 351 to 365 are Cytoplasmic-facing; sequence NEDFKKAFQKLVRCR.

The protein belongs to the G-protein coupled receptor 1 family.

It localises to the cell membrane. Its function is as follows. G-protein coupled receptor for 5-hydroxytryptamine (serotonin). Also functions as a receptor for various alkaloids and psychoactive substances. Ligand binding causes a conformation change that triggers signaling via guanine nucleotide-binding proteins (G proteins) and modulates the activity of downstream effectors, such as adenylate cyclase. HTR1F is coupled to G(i)/G(o) G alpha proteins and mediates inhibitory neurotransmission by inhibiting adenylate cyclase activity. This chain is 5-hydroxytryptamine receptor 1F (HTR1F), found in Pan troglodytes (Chimpanzee).